Consider the following 337-residue polypeptide: Large ribosomal subunit protein uL3 (337 aa).

Residues 1-32 (MAKGHRPRRGSLAYSPRKRSQSHIPRFRSWPE) form a disordered region.

Belongs to the universal ribosomal protein uL3 family. As to quaternary structure, part of the 50S ribosomal subunit. Forms a cluster with proteins L14 and L24e.

One of the primary rRNA binding proteins, it binds directly near the 3'-end of the 23S rRNA, where it nucleates assembly of the 50S subunit. The protein is Large ribosomal subunit protein uL3 of Methanococcoides burtonii (strain DSM 6242 / NBRC 107633 / OCM 468 / ACE-M).